The chain runs to 851 residues: Internalin J (851 aa).

The N-terminal stretch at 1-25 (MKTTKIVIASLVSLTMVSNPLLTFA) is a signal peptide. LRR repeat units follow at residues 94–115 (TLTS…EKLT), 116–136 (GLTK…SQNT), 137–157 (NLTY…TPLT), 158–179 (KLTY…QNPL), 180–200 (LTYL…HNTQ), 201–221 (LTEL…TPQT), 222–243 (QLTT…QNKL), 244–263 (LNRL…NQNI), 264–284 (QLTF…TPLT), 285–306 (QLTY…TLSK), 316–325 (DLLEIDLTHN), 338–357 (KIKE…DCQA), 359–368 (GITELDLSQN), and 380–402 (ELTE…NAHI). MucBP domains are found at residues 506-568 (PIKG…SQSV), 576-638 (IVAA…AQTV), 647-709 (APEK…SQTV), and 717-779 (IEAA…AQTV). The disordered stretch occupies residues 786–825 (NTNTDQPLPTKKPTNTTPTKPSNLKTTEVKKASDTLPKTG). The segment covering 792-811 (PLPTKKPTNTTPTKPSNLKT) has biased composition (low complexity). The LPXTG sorting signal motif lies at 821 to 825 (LPKTG). T824 bears the Pentaglycyl murein peptidoglycan amidated threonine mark. Positions 825 to 851 (GDSAPWKSALLGVFLSSTALVIWKKKK) are cleaved as a propeptide — removed by sortase A.

Belongs to the internalin family. In terms of assembly, nearly full-length mature protein and an internal LRR-containing fragment interact in vitro with human intestinal mucin-2 (MUC2) but not with mucin-1. LRR fragment binding is slightly better at pH 5.5, (the pH of the intestine) than at pH 7.4.

Its subcellular location is the secreted. The protein resides in the cell wall. Despite being transcribed during bacterial growth in culture the protein is only detected in infected mice. Functionally, involved in several steps of L.monocytogenes infection by both intravenous and oral infection. Probably acts as an adhesion; upon ectopic expression in L.innocula bacteria adhere better to human cell lines. This is Internalin J (inlJ) from Listeria monocytogenes serovar 1/2a (strain ATCC BAA-679 / EGD-e).